Here is a 337-residue protein sequence, read N- to C-terminus: MLEGLVSQESLSLNSMDMSVLERLKWVQQQQQQLQQVVSHSSNNSPELLQILQFHGSNNDELLESSFSQFQMLGSGFGPNYNMGFGPPHESISRTSSCHMEPVDTMEVLLKTGEETRAVALKNKRKPEVKTREEQKTEKKIKVEAETESSMKGKSNMGNTEASSDTSKETSKGASENQKLDYIHVRARRGQATDRHSLAERARREKISKKMKYLQDIVPGCNKVTGKAGMLDEIINYVQCLQRQVEFLSMKLAVLNPELELAVEDVSVKQFQAYFTNVVASKQSIMVDVPLFPLDQQGSLDLSAINPNQTTSIEAPSGSWETQSQSLYNTSSLGFHY.

The interval 119-180 is disordered; the sequence is VALKNKRKPE…SKGASENQKL (62 aa). Residues 126-151 show a composition bias toward basic and acidic residues; the sequence is KPEVKTREEQKTEKKIKVEAETESSM. The segment covering 152–165 has biased composition (polar residues); that stretch reads KGKSNMGNTEASSD. The bHLH domain occupies 191-241; sequence QATDRHSLAERARREKISKKMKYLQDIVPGCNKVTGKAGMLDEIINYVQCL.

Homodimer. Interacts with IBH1. As to expression, highly expressed in hypocotyls and cotyledons. Expressed in leaves, stems, and flowers.

Its subcellular location is the nucleus. Functionally, atypical bHLH transcription factor that acts as a positive regulator of cell elongation downstream of multiple external and endogenous signals by direct binding to the promoters and activation of the two expansin genes EXPA1 and EXPA8, encoding cell wall loosening enzymes. Transcriptional activity is inhibited when binding to the bHLH transcription factor IBH1. This is Transcription factor HBI1 (HBI1) from Arabidopsis thaliana (Mouse-ear cress).